The following is a 119-amino-acid chain: Vitelline membrane protein Vm34Ca (119 aa).

The signal sequence occupies residues 1-19; it reads MKCIAIVSTICLLAAFVAA. The region spanning 69–106 is the VM domain; the sequence is SIPAPPCPKNYLFSCQPNLAPVPCSAPAPSYGSAGAYS.

This sequence belongs to the vitelline membrane protein family. Follicle cells.

The protein resides in the secreted. Its function is as follows. Major early eggshell protein. The chain is Vitelline membrane protein Vm34Ca (Vm34Ca) from Drosophila melanogaster (Fruit fly).